Consider the following 413-residue polypeptide: Arginine biosynthesis bifunctional protein ArgJ (413 aa).

Positions 158, 184, 195, 285, 408, and 413 each coordinate substrate. The active-site Nucleophile is T195.

Belongs to the ArgJ family. Heterotetramer of two alpha and two beta chains.

It is found in the cytoplasm. It catalyses the reaction N(2)-acetyl-L-ornithine + L-glutamate = N-acetyl-L-glutamate + L-ornithine. The catalysed reaction is L-glutamate + acetyl-CoA = N-acetyl-L-glutamate + CoA + H(+). Its pathway is amino-acid biosynthesis; L-arginine biosynthesis; L-ornithine and N-acetyl-L-glutamate from L-glutamate and N(2)-acetyl-L-ornithine (cyclic): step 1/1. It participates in amino-acid biosynthesis; L-arginine biosynthesis; N(2)-acetyl-L-ornithine from L-glutamate: step 1/4. In terms of biological role, catalyzes two activities which are involved in the cyclic version of arginine biosynthesis: the synthesis of N-acetylglutamate from glutamate and acetyl-CoA as the acetyl donor, and of ornithine by transacetylation between N(2)-acetylornithine and glutamate. This Rhizobium meliloti (strain 1021) (Ensifer meliloti) protein is Arginine biosynthesis bifunctional protein ArgJ.